A 119-amino-acid chain; its full sequence is Phosphoribosyl-AMP cyclohydrolase (119 aa).

Asp-77 contacts Mg(2+). Cys-78 contributes to the Zn(2+) binding site. Mg(2+)-binding residues include Asp-79 and Asp-81. Cys-94 and Cys-101 together coordinate Zn(2+).

This sequence belongs to the PRA-CH family. As to quaternary structure, homodimer. The cofactor is Mg(2+). Zn(2+) serves as cofactor.

The protein localises to the cytoplasm. The enzyme catalyses 1-(5-phospho-beta-D-ribosyl)-5'-AMP + H2O = 1-(5-phospho-beta-D-ribosyl)-5-[(5-phospho-beta-D-ribosylamino)methylideneamino]imidazole-4-carboxamide. It functions in the pathway amino-acid biosynthesis; L-histidine biosynthesis; L-histidine from 5-phospho-alpha-D-ribose 1-diphosphate: step 3/9. In terms of biological role, catalyzes the hydrolysis of the adenine ring of phosphoribosyl-AMP. The chain is Phosphoribosyl-AMP cyclohydrolase from Cereibacter sphaeroides (strain ATCC 17025 / ATH 2.4.3) (Rhodobacter sphaeroides).